The following is a 396-amino-acid chain: Probable sugar efflux transporter (396 aa).

Transmembrane regions (helical) follow at residues 15–35, 51–71, 84–104, 109–129, 137–157, 168–188, 209–229, 245–265, 273–293, 297–317, 333–353, and 365–385; these read VLIM…PVAM, GLMM…AMLA, LFII…FWIL, MCIA…VMRI, QALG…LPIG, VTFG…IRLL, PLLL…FTAY, NFAT…SLLF, PTKF…LLLF, TIIA…CIGL, VATA…ALFG, and IGYT…TTHL.

The protein belongs to the major facilitator superfamily. SotB (TC 2.A.1.2) family.

The protein localises to the cell inner membrane. In terms of biological role, involved in the efflux of sugars. The physiological role may be the reduction of the intracellular concentration of toxic sugars or sugar metabolites. The sequence is that of Probable sugar efflux transporter from Haemophilus influenzae (strain ATCC 51907 / DSM 11121 / KW20 / Rd).